A 320-amino-acid polypeptide reads, in one-letter code: Biotin synthase (320 aa).

Residues 46–275 (NMGRRVDLCS…YAHIRYAGGR (230 aa)) enclose the Radical SAM core domain. [4Fe-4S] cluster-binding residues include Cys64, Cys68, and Cys71. Ser108, Cys140, Cys200, and Arg270 together coordinate [2Fe-2S] cluster.

This sequence belongs to the radical SAM superfamily. Biotin synthase family. In terms of assembly, homodimer. [4Fe-4S] cluster is required as a cofactor. [2Fe-2S] cluster serves as cofactor.

It carries out the reaction (4R,5S)-dethiobiotin + (sulfur carrier)-SH + 2 reduced [2Fe-2S]-[ferredoxin] + 2 S-adenosyl-L-methionine = (sulfur carrier)-H + biotin + 2 5'-deoxyadenosine + 2 L-methionine + 2 oxidized [2Fe-2S]-[ferredoxin]. Its pathway is cofactor biosynthesis; biotin biosynthesis; biotin from 7,8-diaminononanoate: step 2/2. Catalyzes the conversion of dethiobiotin (DTB) to biotin by the insertion of a sulfur atom into dethiobiotin via a radical-based mechanism. The polypeptide is Biotin synthase (Acetivibrio thermocellus (strain ATCC 27405 / DSM 1237 / JCM 9322 / NBRC 103400 / NCIMB 10682 / NRRL B-4536 / VPI 7372) (Clostridium thermocellum)).